Consider the following 283-residue polypeptide: Bis(5'-nucleosyl)-tetraphosphatase, symmetrical (283 aa).

The protein belongs to the Ap4A hydrolase family.

It carries out the reaction P(1),P(4)-bis(5'-adenosyl) tetraphosphate + H2O = 2 ADP + 2 H(+). Hydrolyzes diadenosine 5',5'''-P1,P4-tetraphosphate to yield ADP. The protein is Bis(5'-nucleosyl)-tetraphosphatase, symmetrical of Serratia proteamaculans (strain 568).